A 646-amino-acid chain; its full sequence is Threonine--tRNA ligase (646 aa).

In terms of domain architecture, TGS spans 1-61; sequence MIKITFPDGS…NEDASVVLYK (61 aa). A catalytic region spans residues 242 to 541; sequence DHRKIGKEMQ…LIEHTAGKFP (300 aa). Cysteine 337, histidine 388, and histidine 518 together coordinate Zn(2+).

This sequence belongs to the class-II aminoacyl-tRNA synthetase family. In terms of assembly, homodimer. The cofactor is Zn(2+).

The protein localises to the cytoplasm. It carries out the reaction tRNA(Thr) + L-threonine + ATP = L-threonyl-tRNA(Thr) + AMP + diphosphate + H(+). In terms of biological role, catalyzes the attachment of threonine to tRNA(Thr) in a two-step reaction: L-threonine is first activated by ATP to form Thr-AMP and then transferred to the acceptor end of tRNA(Thr). Also edits incorrectly charged L-seryl-tRNA(Thr). The polypeptide is Threonine--tRNA ligase (Bacteroides fragilis (strain YCH46)).